The primary structure comprises 121 residues: Lysozyme (121 aa).

A C-type lysozyme domain is found at 1-121 (KTFTRCELVQ…NKPLPDISKC (121 aa)). Intrachain disulfides connect Cys-6–Cys-121, Cys-27–Cys-110, Cys-62–Cys-76, and Cys-72–Cys-90. Residues Glu-32 and Asp-50 contribute to the active site.

The protein belongs to the glycosyl hydrolase 22 family.

The catalysed reaction is Hydrolysis of (1-&gt;4)-beta-linkages between N-acetylmuramic acid and N-acetyl-D-glucosamine residues in a peptidoglycan and between N-acetyl-D-glucosamine residues in chitodextrins.. Lysozymes have primarily a bacteriolytic function; those in tissues and body fluids are associated with the monocyte-macrophage system and enhance the activity of immunoagents. This is Lysozyme from Galleria mellonella (Greater wax moth).